The chain runs to 378 residues: Dof zinc finger protein 1 (378 aa).

Residues 28-38 (GANPNPAATAP) are compositionally biased toward low complexity. The tract at residues 28 to 79 (GANPNPAATAPSSVTGGALRGGGGGGAPPVAGGAGAGSTERRARPQKEKALN) is disordered. The span at 45-63 (ALRGGGGGGAPPVAGGAGA) shows a compositional bias: gly residues. Basic and acidic residues predominate over residues 66-77 (TERRARPQKEKA). The segment at 78 to 132 (LNCPRCNSTNTKFCYYNNYSLQQPRYFCKTCRRYWTEGGSLRNVPVGGGSRKNKR) adopts a Dof-type zinc-finger fold. C80, C83, C105, and C108 together coordinate Zn(2+). 3 disordered regions span residues 116 to 148 (GSLRNVPVGGGSRKNKRSSSSAASASPASASTA), 203 to 222 (SLESSSVCNPGGPMGTNGRG), and 316 to 378 (LKPT…GTSW). A compositionally biased stretch (low complexity) spans 133–148 (SSSSAASASPASASTA). 3 stretches are compositionally biased toward gly residues: residues 323–338 (GTGGGGASGGGAGVDG), 350–361 (AGGGGGGPGGHD), and 369–378 (MIGGGSGTSW).

It localises to the nucleus. Transcription factor that may transactivate seed storage protein genes in developing seeds. The polypeptide is Dof zinc finger protein 1 (Oryza sativa subsp. japonica (Rice)).